Reading from the N-terminus, the 77-residue chain is uncharacterized protein (77 aa).

This is an uncharacterized protein from Vaccinia virus (strain Copenhagen) (VACV).